The chain runs to 37 residues: Cytochrome b6-f complex subunit 5 (37 aa).

The helical transmembrane segment at 5 to 25 threads the bilayer; it reads ILLGIVLGMVLVTLAGLFVAA.

It belongs to the PetG family. In terms of assembly, the 4 large subunits of the cytochrome b6-f complex are cytochrome b6, subunit IV (17 kDa polypeptide, PetD), cytochrome f and the Rieske protein, while the 4 small subunits are PetG, PetL, PetM and PetN. The complex functions as a dimer.

The protein localises to the cellular thylakoid membrane. Component of the cytochrome b6-f complex, which mediates electron transfer between photosystem II (PSII) and photosystem I (PSI), cyclic electron flow around PSI, and state transitions. PetG is required for either the stability or assembly of the cytochrome b6-f complex. The protein is Cytochrome b6-f complex subunit 5 of Synechococcus sp. (strain JA-3-3Ab) (Cyanobacteria bacterium Yellowstone A-Prime).